The chain runs to 716 residues: Exocyst complex component 8 (716 aa).

Ser-15 is modified (phosphoserine). A disordered region spans residues 129 to 150; sequence GFLPGPAGVPREGSGTGEEGKQ. Positions 173 to 273 constitute a PH domain; it reads YLVYNGDLVE…WLEVLEETKR (101 aa). Basic and acidic residues predominate over residues 275–284; the sequence is LSDKRRREQE. The disordered stretch occupies residues 275–319; sequence LSDKRRREQEEAAAPRAPPPVTSKGSNPFEDEDDEELATPEAEEE. A compositionally biased stretch (acidic residues) spans 303-319; sequence FEDEDDEELATPEAEEE. Thr-313 carries the phosphothreonine modification.

Belongs to the EXO84 family. As to quaternary structure, the exocyst complex is composed of EXOC1, EXOC2, EXOC3, EXOC4, EXOC5, EXOC6, EXOC7 and EXOC8. Interacts (via PH domain) with GTP-bound RALA and RALB. Interacts with SH3BP1; required for the localization of both SH3BP1 and the exocyst to the leading edge of migrating cells.

The protein resides in the cytoplasm. Its subcellular location is the perinuclear region. It localises to the cell projection. It is found in the growth cone. In terms of biological role, component of the exocyst complex involved in the docking of exocytic vesicles with fusion sites on the plasma membrane. The chain is Exocyst complex component 8 (Exoc8) from Mus musculus (Mouse).